Consider the following 95-residue polypeptide: Protein K6 (95 aa).

The first 24 residues, 1-24 (MAPVHVLCCVSVLLATFYLTPTES), serve as a signal peptide directing secretion.

The protein is Protein K6 (K6) of Human herpesvirus 8 type P (isolate GK18) (HHV-8).